We begin with the raw amino-acid sequence, 105 residues long: Cell division protein FtsB (105 aa).

Residues 1–3 lie on the Cytoplasmic side of the membrane; sequence MGK. Residues 4 to 21 traverse the membrane as a helical segment; that stretch reads LTLLLLALLVWLQYSLWF. Over 22-105 the chain is Periplasmic; sequence GKNGLHDYTR…QASGQQQNNR (84 aa). Residues 33–62 are a coiled coil; it reads NDDVTAQQATNAKLKARNDQLFAEIDDLNG.

Belongs to the FtsB family. In terms of assembly, part of a complex composed of FtsB, FtsL and FtsQ.

It localises to the cell inner membrane. Its function is as follows. Essential cell division protein. May link together the upstream cell division proteins, which are predominantly cytoplasmic, with the downstream cell division proteins, which are predominantly periplasmic. In Klebsiella aerogenes (Enterobacter aerogenes), this protein is Cell division protein FtsB.